The primary structure comprises 694 residues: ATP-binding cassette sub-family G member 8 (694 aa).

Residues 1–437 (MAEKTKEETQ…ISNDFRDLPT (437 aa)) are Cytoplasmic-facing. Residues 91–335 (AQFKLPWRSR…FTSIGYPCPR (245 aa)) enclose the ABC transporter domain. In terms of domain architecture, ABC transmembrane type-2 spans 436–684 (PTLFIHGAEA…FLSLYYLSLK (249 aa)). The chain crosses the membrane as a helical span at residues 438-458 (LFIHGAEACLMSLIIGFLYYG). Over 459–468 (HADKPLSFMD) the chain is Extracellular. Residues 469-489 (MAALLFMIGALIPFNVILDVV) form a helical membrane-spanning segment. Residues 490–518 (SKCHSERSLLYYELEDGLYTAGPYFFAKV) are Cytoplasmic-facing. The chain crosses the membrane as a helical span at residues 519-539 (LGELPEHCAYVIIYGMPIYWL). Residues 540-548 (TNLRPGPEL) lie on the Extracellular side of the membrane. The chain crosses the membrane as a helical span at residues 549–569 (FLLHFMLLWLVVFCCRTMALA). Over 570-576 (ASAMLPT) the chain is Cytoplasmic. A helical membrane pass occupies residues 577-597 (FHMSSFCCNALYNSFYLTAGF). The Extracellular portion of the chain corresponds to 598–660 (MINLNNLWIV…VTAMDLNSHP (63 aa)). Asn640 carries an N-linked (GlcNAc...) asparagine glycan. The helical transmembrane segment at 661–681 (LYAIYLIVIGISCGFLSLYYL) threads the bilayer. The Cytoplasmic portion of the chain corresponds to 682–694 (SLKFIKQKSIQDW).

Belongs to the ABC transporter superfamily. ABCG family. Eye pigment precursor importer (TC 3.A.1.204) subfamily. In terms of assembly, heterodimer with ABCG8. Mg(2+) is required as a cofactor. In terms of processing, N-glycosylated. N-glycosylation is important for efficient export out of the endoplasmic reticulum. As to expression, highest expression in liver, with lower levels in small intestine and colon.

It localises to the cell membrane. Its subcellular location is the apical cell membrane. The enzyme catalyses cholesterol(in) + ATP + H2O = cholesterol(out) + ADP + phosphate + H(+). It catalyses the reaction sitosterol(in) + ATP + H2O = sitosterol(out) + ADP + phosphate + H(+). In terms of biological role, ABCG5 and ABCG8 form an obligate heterodimer that mediates Mg(2+)- and ATP-dependent sterol transport across the cell membrane. Plays an essential role in the selective transport of the dietary cholesterol in and out of the enterocytes and in the selective sterol excretion by the liver into bile. Required for normal sterol homeostasis. The heterodimer with ABCG5 has ATPase activity. This Rattus norvegicus (Rat) protein is ATP-binding cassette sub-family G member 8.